The primary structure comprises 398 residues: Aldo-keto reductase ausK (398 aa).

NADP(+) is bound at residue Asp-76. Tyr-81 acts as the Proton donor in catalysis. Substrate is bound at residue His-156. NADP(+) contacts are provided by residues 186 to 187 (CN), Gln-212, 241 to 251 (DALGSGKFQSR), and 317 to 325 (RKIQHLHDN).

The protein belongs to the aldo/keto reductase family. Aldo/keto reductase 2 subfamily. Homodimer.

Its pathway is secondary metabolite biosynthesis; terpenoid biosynthesis. Its function is as follows. Aldo-keto reductase; part of the gene cluster B that mediates the biosynthesis of austinol and dehydroaustinol, two fungal meroterpenoids. The first step of the pathway is the synthesis of 3,5-dimethylorsellinic acid by the polyketide synthase ausA. 3,5-dimethylorsellinic acid is then prenylated by the polyprenyl transferase ausN. Further epoxidation by the FAD-dependent monooxygenase ausM and cyclization by the probable terpene cyclase ausL lead to the formation of protoaustinoid A. Protoaustinoid A is then oxidized to spiro-lactone preaustinoid A3 by the combined action of the FAD-binding monooxygenases ausB and ausC, and the dioxygenase ausE. Acid-catalyzed keto-rearrangement and ring contraction of the tetraketide portion of preaustinoid A3 by ausJ lead to the formation of preaustinoid A4. The aldo-keto reductase ausK, with the help of ausH, is involved in the next step by transforming preaustinoid A4 into isoaustinone which is in turn hydroxylated by the P450 monooxygenase ausI to form austinolide. Finally, the cytochrome P450 monooxygenase ausG modifies austinolide to austinol. Austinol can be further modified to dehydroaustinol which forms a diffusible complex with diorcinol that initiates conidiation. Due to genetic rearrangements of the clusters and the subsequent loss of some enzymes, the end products of the Emericella nidulans austinoid biosynthesis clusters are austinol and dehydroaustinol, even if additional enzymes, such as the O-acetyltransferase ausQ and the cytochrome P450 monooxygenase ausR are still functional. This is Aldo-keto reductase ausK from Emericella nidulans (strain FGSC A4 / ATCC 38163 / CBS 112.46 / NRRL 194 / M139) (Aspergillus nidulans).